We begin with the raw amino-acid sequence, 344 residues long: tRNA(Ile)-lysidine synthase (344 aa).

43 to 48 is a binding site for ATP; it reads SGGADS.

It belongs to the tRNA(Ile)-lysidine synthase family.

It is found in the cytoplasm. The enzyme catalyses cytidine(34) in tRNA(Ile2) + L-lysine + ATP = lysidine(34) in tRNA(Ile2) + AMP + diphosphate + H(+). In terms of biological role, ligates lysine onto the cytidine present at position 34 of the AUA codon-specific tRNA(Ile) that contains the anticodon CAU, in an ATP-dependent manner. Cytidine is converted to lysidine, thus changing the amino acid specificity of the tRNA from methionine to isoleucine. The protein is tRNA(Ile)-lysidine synthase of Bordetella bronchiseptica (strain ATCC BAA-588 / NCTC 13252 / RB50) (Alcaligenes bronchisepticus).